The following is a 487-amino-acid chain: Serine/threonine-protein kinase 4 (487 aa).

M1 is modified (N-acetylmethionine). Residue T3 is modified to Phosphothreonine. Positions 30–281 (FDVLEKLGEG…ATQLLQHPFV (252 aa)) constitute a Protein kinase domain. ATP is bound by residues 36-44 (LGEGSYGSV) and K59. Residue D149 is the Proton acceptor of the active site. Position 183 is a phosphothreonine; by autocatalysis (T183). The residue at position 265 (S265) is a Phosphoserine. Positions 290-310 (LRDLINEAMDVKLKRQESQQR) form a coiled coil. Positions 303 to 312 (KRQESQQREV) are enriched in basic and acidic residues. The tract at residues 303–332 (KRQESQQREVDQDDEENSEEDEMDSGTMVR) is disordered. Residues 313-326 (DQDDEENSEEDEMD) are compositionally biased toward acidic residues. The residue at position 320 (S320) is a Phosphoserine. T340 and T367 each carry phosphothreonine. Position 387 is a phosphothreonine; by PKB/AKT1 (T387). Residues S410 and S414 each carry the phosphoserine modification. A Phosphotyrosine modification is found at Y433. The 48-residue stretch at 433–480 (YEFLKSWTVEDLQKRLLALDPMMEQEIEEIRQKYQSKRQPILDAIEAK) folds into the SARAH domain.

It belongs to the protein kinase superfamily. STE Ser/Thr protein kinase family. STE20 subfamily. Homodimer; mediated via the coiled-coil region. Interacts with NORE1, which inhibits autoactivation. Interacts with and stabilizes SAV1. Interacts with RASSF1. Interacts with FOXO3. Interacts with RASSF2 (via SARAH domain). Interacts with AR, PKB/AKT1, TNNI3 and SIRT1. Interacts with DLG5 (via PDZ domain 3). Interacts with MARK3 and SCRIB in the presence of DLG5. It depends on Mg(2+) as a cofactor. Autophosphorylated on serine and threonine residues. Phosphorylation at Thr-387 by PKB/AKT1, leads to inhibition of its: kinase activity, nuclear translocation and autophosphorylation at Thr-183. It also diminishes its cleavage by caspases and its ability to phosphorylate FOXO3. Post-translationally, proteolytically cleaved by caspase-3 during apoptosis at Asp-326 and Asp-349 resulting in a 37 kDa or a 39 kDa subunit respectively. The 39 kDa subunit is further cleaved into the 37 kDa form. Proteolytic cleavage results in kinase activation and nuclear translocation of the truncated form (MST1/N). It is less likely that cleavage at Asp-349 is a prerequisite for activation as this site is not conserved in the murine ortholog.

The protein resides in the cytoplasm. The protein localises to the nucleus. The enzyme catalyses L-seryl-[protein] + ATP = O-phospho-L-seryl-[protein] + ADP + H(+). The catalysed reaction is L-threonyl-[protein] + ATP = O-phospho-L-threonyl-[protein] + ADP + H(+). Inhibited by the C-terminal non-catalytic region. Activated by caspase-cleavage. Full activation also requires homodimerization and autophosphorylation of Thr-183. Activated by RASSF1 which acts by preventing its dephosphorylation. Stress-activated, pro-apoptotic kinase which, following caspase-cleavage, enters the nucleus and induces chromatin condensation followed by internucleosomal DNA fragmentation. Key component of the Hippo signaling pathway which plays a pivotal role in organ size control and tumor suppression by restricting proliferation and promoting apoptosis. The core of this pathway is composed of a kinase cascade wherein STK3/MST2 and STK4/MST1, in complex with its regulatory protein SAV1, phosphorylates and activates LATS1/2 in complex with its regulatory protein MOB1, which in turn phosphorylates and inactivates YAP1 oncoprotein and WWTR1/TAZ. Phosphorylation of YAP1 by LATS2 inhibits its translocation into the nucleus to regulate cellular genes important for cell proliferation, cell death, and cell migration. STK3/MST2 and STK4/MST1 are required to repress proliferation of mature hepatocytes, to prevent activation of facultative adult liver stem cells (oval cells), and to inhibit tumor formation. Phosphorylates 'Ser-14' of histone H2B (H2BS14ph) during apoptosis. Phosphorylates FOXO3 upon oxidative stress, which results in its nuclear translocation and cell death initiation. Phosphorylates MOBKL1A, MOBKL1B and RASSF2. Phosphorylates TNNI3 (cardiac Tn-I) and alters its binding affinity to TNNC1 (cardiac Tn-C) and TNNT2 (cardiac Tn-T). Phosphorylates FOXO1 on 'Ser-212' and regulates its activation and stimulates transcription of PMAIP1 in a FOXO1-dependent manner. Phosphorylates SIRT1 and inhibits SIRT1-mediated p53/TP53 deacetylation, thereby promoting p53/TP53 dependent transcription and apoptosis upon DNA damage. Acts as an inhibitor of PKB/AKT1. Phosphorylates AR on 'Ser-650' and suppresses its activity by intersecting with PKB/AKT1 signaling and antagonizing formation of AR-chromatin complexes. This Colobus guereza (Mantled guereza) protein is Serine/threonine-protein kinase 4 (STK4).